Consider the following 79-residue polypeptide: Calcium/calmodulin-dependent protein kinase II inhibitor 2 (79 aa).

The disordered stretch occupies residues 1 to 21 (MSEILPYGEDKMGRFGADPEG). Residues 43 to 69 (KRPPKLGQIGRAKRVVIEDDRIDDVLK) are inhibitory domain.

The protein belongs to the CAMK2N family. As to quaternary structure, interacts with CAMK2A and CAMK2B in the presence of Ca(2+)/calmodulin or after autophosphorylation.

Its subcellular location is the nucleus. It localises to the cytoplasm. The protein resides in the cytosol. It is found in the synapse. In terms of biological role, potent and specific cellular inhibitor of CaM-kinase II (CAMK2). Traps Ca(2+)/calmodulin on CAMK2. In Mus musculus (Mouse), this protein is Calcium/calmodulin-dependent protein kinase II inhibitor 2 (Camk2n2).